We begin with the raw amino-acid sequence, 156 residues long: Arginine repressor (156 aa).

It belongs to the ArgR family.

The protein localises to the cytoplasm. The protein operates within amino-acid biosynthesis; L-arginine biosynthesis [regulation]. Regulates arginine biosynthesis genes. The sequence is that of Arginine repressor from Shewanella oneidensis (strain ATCC 700550 / JCM 31522 / CIP 106686 / LMG 19005 / NCIMB 14063 / MR-1).